The sequence spans 425 residues: Histidine--tRNA ligase 2 (425 aa).

The protein belongs to the class-II aminoacyl-tRNA synthetase family. Homodimer.

It is found in the cytoplasm. It carries out the reaction tRNA(His) + L-histidine + ATP = L-histidyl-tRNA(His) + AMP + diphosphate + H(+). The polypeptide is Histidine--tRNA ligase 2 (Shouchella clausii (strain KSM-K16) (Alkalihalobacillus clausii)).